The following is a 215-amino-acid chain: Peroxiredoxin 1 (215 aa).

In terms of domain architecture, Thioredoxin spans 2 to 157; it reads KLLGEKFPSM…ILRALKALQT (156 aa). Cysteine 44 (cysteine sulfenic acid (-SOH) intermediate) is an active-site residue. A substrate-binding site is contributed by arginine 120.

This sequence belongs to the peroxiredoxin family. Prx6 subfamily. Homodecamer. Pentamer of dimers that assemble into a ring structure.

It is found in the cytoplasm. The catalysed reaction is a hydroperoxide + [thioredoxin]-dithiol = an alcohol + [thioredoxin]-disulfide + H2O. Thiol-specific peroxidase that catalyzes the reduction of hydrogen peroxide and organic hydroperoxides to water and alcohols, respectively. Plays a role in cell protection against oxidative stress by detoxifying peroxides. This Caldanaerobacter subterraneus subsp. tengcongensis (strain DSM 15242 / JCM 11007 / NBRC 100824 / MB4) (Thermoanaerobacter tengcongensis) protein is Peroxiredoxin 1.